A 479-amino-acid chain; its full sequence is Ribosomal RNA small subunit methyltransferase F (479 aa).

Residues 125-131 (AAAPGSK), Glu-149, Asp-176, and Asp-194 contribute to the S-adenosyl-L-methionine site. The active-site Nucleophile is the Cys-247.

The protein belongs to the class I-like SAM-binding methyltransferase superfamily. RsmB/NOP family.

Its subcellular location is the cytoplasm. It catalyses the reaction cytidine(1407) in 16S rRNA + S-adenosyl-L-methionine = 5-methylcytidine(1407) in 16S rRNA + S-adenosyl-L-homocysteine + H(+). In terms of biological role, specifically methylates the cytosine at position 1407 (m5C1407) of 16S rRNA. This chain is Ribosomal RNA small subunit methyltransferase F, found in Escherichia coli O7:K1 (strain IAI39 / ExPEC).